The chain runs to 116 residues: Nucleoid-associated protein Tfu_0045 (116 aa).

The protein belongs to the YbaB/EbfC family. Homodimer.

The protein localises to the cytoplasm. Its subcellular location is the nucleoid. Its function is as follows. Binds to DNA and alters its conformation. May be involved in regulation of gene expression, nucleoid organization and DNA protection. The chain is Nucleoid-associated protein Tfu_0045 from Thermobifida fusca (strain YX).